Consider the following 265-residue polypeptide: Glutamate racemase (265 aa).

Residues 12-13 (DS) and 44-45 (YG) each bind substrate. C75 serves as the catalytic Proton donor/acceptor. 76-77 (NT) provides a ligand contact to substrate. C183 functions as the Proton donor/acceptor in the catalytic mechanism. 184–185 (TH) contributes to the substrate binding site.

This sequence belongs to the aspartate/glutamate racemases family.

It carries out the reaction L-glutamate = D-glutamate. It functions in the pathway cell wall biogenesis; peptidoglycan biosynthesis. Its function is as follows. Provides the (R)-glutamate required for cell wall biosynthesis. This Carboxydothermus hydrogenoformans (strain ATCC BAA-161 / DSM 6008 / Z-2901) protein is Glutamate racemase.